Reading from the N-terminus, the 216-residue chain is Probable GTP-binding protein EngB (216 aa).

The EngB-type G domain maps to 24–205 (QTPELAFVGR…WARIASAATD (182 aa)). GTP is bound by residues 32-39 (GRSNVGKS), 59-63 (GRTRA), 86-89 (DLPG), 153-156 (TKMD), and 184-186 (FSA). Residues Ser-39 and Thr-61 each contribute to the Mg(2+) site.

Belongs to the TRAFAC class TrmE-Era-EngA-EngB-Septin-like GTPase superfamily. EngB GTPase family. Requires Mg(2+) as cofactor.

Necessary for normal cell division and for the maintenance of normal septation. The chain is Probable GTP-binding protein EngB from Anaeromyxobacter sp. (strain Fw109-5).